We begin with the raw amino-acid sequence, 456 residues long: Phosphomethylpyrimidine synthase (456 aa).

Substrate contacts are provided by residues Asn-80, Met-109, Tyr-139, His-175, 195–197, 236–239, and Glu-275; these read SRG and DSLR. His-279 is a Zn(2+) binding site. Tyr-302 serves as a coordination point for substrate. His-343 lines the Zn(2+) pocket. [4Fe-4S] cluster-binding residues include Cys-423, Cys-426, and Cys-431.

This sequence belongs to the ThiC family. It depends on [4Fe-4S] cluster as a cofactor.

The enzyme catalyses 5-amino-1-(5-phospho-beta-D-ribosyl)imidazole + S-adenosyl-L-methionine = 4-amino-2-methyl-5-(phosphooxymethyl)pyrimidine + CO + 5'-deoxyadenosine + formate + L-methionine + 3 H(+). Its pathway is cofactor biosynthesis; thiamine diphosphate biosynthesis. Its function is as follows. Catalyzes the synthesis of the hydroxymethylpyrimidine phosphate (HMP-P) moiety of thiamine from aminoimidazole ribotide (AIR) in a radical S-adenosyl-L-methionine (SAM)-dependent reaction. This Prochlorococcus marinus (strain MIT 9215) protein is Phosphomethylpyrimidine synthase.